We begin with the raw amino-acid sequence, 118 residues long: Small ribosomal subunit protein uS13 (118 aa).

The interval 93 to 118 (RGLPVRGQRTKTNARTRKGPRKPIRK) is disordered.

Belongs to the universal ribosomal protein uS13 family. Part of the 30S ribosomal subunit. Forms a loose heterodimer with protein S19. Forms two bridges to the 50S subunit in the 70S ribosome.

Located at the top of the head of the 30S subunit, it contacts several helices of the 16S rRNA. In the 70S ribosome it contacts the 23S rRNA (bridge B1a) and protein L5 of the 50S subunit (bridge B1b), connecting the 2 subunits; these bridges are implicated in subunit movement. Contacts the tRNAs in the A and P-sites. This Pseudomonas fluorescens (strain ATCC BAA-477 / NRRL B-23932 / Pf-5) protein is Small ribosomal subunit protein uS13.